The primary structure comprises 333 residues: MVINDIESLTAQALAEVAAAQNLDHLEFLRVALLGKNGSITLQLKQLGKLPVEQRKAIGEKLNRVRDLISDALMDRKAALESAALSKRLIDERVDVTLPGRRGERAGLHPVTRTLERITEIFARLGYELVEGPEIEDDWHNFEALNFPLHHPARAMHDTFYFGDGRLLRTHTSGVQVRYMSDHRPPLRMIAAGKVYRSDSDQTHSPMFHQIEGLLLDKHATFVDLKGTLSEFLRAFFERDFEVRFRPSYFPFVEPGAEVDIAWQQSDSSVRWLEVLGCGMVHPNVLKNVGIDSECYTGFAFGLGVERFAMLRYGVDDLRAFFENDVRFLRQFS.

Mg(2+) is bound at residue glutamate 254.

Belongs to the class-II aminoacyl-tRNA synthetase family. Phe-tRNA synthetase alpha subunit type 1 subfamily. As to quaternary structure, tetramer of two alpha and two beta subunits. The cofactor is Mg(2+).

Its subcellular location is the cytoplasm. The enzyme catalyses tRNA(Phe) + L-phenylalanine + ATP = L-phenylalanyl-tRNA(Phe) + AMP + diphosphate + H(+). In Xylella fastidiosa (strain M23), this protein is Phenylalanine--tRNA ligase alpha subunit.